Reading from the N-terminus, the 89-residue chain is Large ribosomal subunit protein eL37A (89 aa).

4 residues coordinate Zn(2+): cysteine 19, cysteine 22, cysteine 34, and cysteine 37. The C4-type zinc-finger motif lies at 19–37 (CRRCGKRSFHIQKSTCACC).

It belongs to the eukaryotic ribosomal protein eL37 family. As to quaternary structure, component of the large ribosomal subunit (LSU). Mature yeast ribosomes consist of a small (40S) and a large (60S) subunit. The 40S small subunit contains 1 molecule of ribosomal RNA (18S rRNA) and at least 33 different proteins. The large 60S subunit contains 3 rRNA molecules (25S, 5.8S and 5S rRNA) and at least 46 different proteins. Zn(2+) serves as cofactor.

The protein localises to the cytoplasm. In terms of biological role, component of the ribosome, a large ribonucleoprotein complex responsible for the synthesis of proteins in the cell. The small ribosomal subunit (SSU) binds messenger RNAs (mRNAs) and translates the encoded message by selecting cognate aminoacyl-transfer RNA (tRNA) molecules. The large subunit (LSU) contains the ribosomal catalytic site termed the peptidyl transferase center (PTC), which catalyzes the formation of peptide bonds, thereby polymerizing the amino acids delivered by tRNAs into a polypeptide chain. The nascent polypeptides leave the ribosome through a tunnel in the LSU and interact with protein factors that function in enzymatic processing, targeting, and the membrane insertion of nascent chains at the exit of the ribosomal tunnel. This is Large ribosomal subunit protein eL37A (rpl3703) from Schizosaccharomyces pombe (strain 972 / ATCC 24843) (Fission yeast).